The primary structure comprises 530 residues: Autoinducer-2 kinase (530 aa).

It belongs to the FGGY kinase family.

Its subcellular location is the cytoplasm. It catalyses the reaction (S)-4,5-dihydroxypentane-2,3-dione + ATP = (2S)-2-hydroxy-3,4-dioxopentyl phosphate + ADP + H(+). Functionally, catalyzes the phosphorylation of autoinducer-2 (AI-2) to phospho-AI-2, which subsequently inactivates the transcriptional regulator LsrR and leads to the transcription of the lsr operon. Phosphorylates the ring-open form of (S)-4,5-dihydroxypentane-2,3-dione (DPD), which is the precursor to all AI-2 signaling molecules, at the C5 position. The polypeptide is Autoinducer-2 kinase (Salmonella paratyphi A (strain ATCC 9150 / SARB42)).